We begin with the raw amino-acid sequence, 394 residues long: MEFIIKSLLDTDLYKFTMMQAVLHQYPGAQVEYRFKCRTPGVDLARFINEISHEIDGLCALRFSKEELDYLRGLRFMKPDFVDFLGLFHLDRKYLQLRASTQVSGEIELDIRGPWLHTILFEVPLLAIINEVWFRNTSMLNLDVGRARLDAKVRLLKGESGYEECSIADYGTRRRYSRQWHAELLPLLAQGLGSNFVGTSNVYFAKQYGYTPLGTMAHEYLQAFQALGPRLRDSQVAGLEAWAREYRGDLGIALSDVVGLDAFLGDFDLYFCKLFDGMRHDSGDPFKWGERIIMHLESHRIDPRTKVLVFSDGLDMNKVMRLYQHFRGRCRLAFGVGTSLTNDLGPTPLQIVIKMVRCNGQPVAKLSDSPGKSMCDDPAYLHYLRQVFGVSADV.

H218 is subject to Phosphohistidine; by autocatalysis.

It belongs to the NAPRTase family. Post-translationally, transiently phosphorylated on a His residue during the reaction cycle. Phosphorylation strongly increases the affinity for substrates and increases the rate of nicotinate D-ribonucleotide production. Dephosphorylation regenerates the low-affinity form of the enzyme, leading to product release.

The enzyme catalyses nicotinate + 5-phospho-alpha-D-ribose 1-diphosphate + ATP + H2O = nicotinate beta-D-ribonucleotide + ADP + phosphate + diphosphate. It functions in the pathway cofactor biosynthesis; NAD(+) biosynthesis; nicotinate D-ribonucleotide from nicotinate: step 1/1. In terms of biological role, catalyzes the synthesis of beta-nicotinate D-ribonucleotide from nicotinate and 5-phospho-D-ribose 1-phosphate at the expense of ATP. The sequence is that of Nicotinate phosphoribosyltransferase from Xylella fastidiosa (strain 9a5c).